We begin with the raw amino-acid sequence, 337 residues long: Diacylglycerol O-acyltransferase 2-like protein 6 (337 aa).

2 helical membrane-spanning segments follow: residues 22–42 (IPVYVLLGTLSILGMPYLLLF) and 102–122 (YIILSHPHGILSYGAFINFAT).

Belongs to the diacylglycerol acyltransferase family.

It localises to the endoplasmic reticulum membrane. It catalyses the reaction 1,2-di-(9Z-octadecenoyl)-sn-glycerol + (9Z)-octadecenoyl-CoA = 1,2,3-tri-(9Z-octadecenoyl)-glycerol + CoA. Its function is as follows. Diglyceride acyltransferase that uses fatty acyl-CoA as substrate. Particularly active with oleate as a substrate. Has no wax synthase activity to produce wax esters. The protein is Diacylglycerol O-acyltransferase 2-like protein 6 (Dgat2l6) of Mus musculus (Mouse).